A 348-amino-acid polypeptide reads, in one-letter code: Dual-specificity RNA methyltransferase RlmN (348 aa).

The active-site Proton acceptor is E94. In terms of domain architecture, Radical SAM core spans 100-330; that stretch reads GKHNWTACIS…TAIIRASRGR (231 aa). Residues C107 and C336 are joined by a disulfide bond. The [4Fe-4S] cluster site is built by C114, C118, and C121. S-adenosyl-L-methionine-binding positions include 163–164, S195, 217–219, and N293; these read GE and SLN. C336 (S-methylcysteine intermediate) is an active-site residue.

It belongs to the radical SAM superfamily. RlmN family. [4Fe-4S] cluster serves as cofactor.

It localises to the cytoplasm. The catalysed reaction is adenosine(2503) in 23S rRNA + 2 reduced [2Fe-2S]-[ferredoxin] + 2 S-adenosyl-L-methionine = 2-methyladenosine(2503) in 23S rRNA + 5'-deoxyadenosine + L-methionine + 2 oxidized [2Fe-2S]-[ferredoxin] + S-adenosyl-L-homocysteine. It catalyses the reaction adenosine(37) in tRNA + 2 reduced [2Fe-2S]-[ferredoxin] + 2 S-adenosyl-L-methionine = 2-methyladenosine(37) in tRNA + 5'-deoxyadenosine + L-methionine + 2 oxidized [2Fe-2S]-[ferredoxin] + S-adenosyl-L-homocysteine. Its function is as follows. Specifically methylates position 2 of adenine 2503 in 23S rRNA and position 2 of adenine 37 in tRNAs. m2A2503 modification seems to play a crucial role in the proofreading step occurring at the peptidyl transferase center and thus would serve to optimize ribosomal fidelity. The chain is Dual-specificity RNA methyltransferase RlmN from Syntrophus aciditrophicus (strain SB).